Reading from the N-terminus, the 186-residue chain is Putative 3-methyladenine DNA glycosylase (186 aa).

The protein belongs to the DNA glycosylase MPG family.

In Borrelia garinii subsp. bavariensis (strain ATCC BAA-2496 / DSM 23469 / PBi) (Borreliella bavariensis), this protein is Putative 3-methyladenine DNA glycosylase.